The chain runs to 501 residues: Bifunctional purine biosynthesis protein PurH (501 aa).

One can recognise an MGS-like domain in the interval 1–144 (MKKRALISVF…KNFKDVVVLS (144 aa)).

Belongs to the PurH family.

It carries out the reaction (6R)-10-formyltetrahydrofolate + 5-amino-1-(5-phospho-beta-D-ribosyl)imidazole-4-carboxamide = 5-formamido-1-(5-phospho-D-ribosyl)imidazole-4-carboxamide + (6S)-5,6,7,8-tetrahydrofolate. It catalyses the reaction IMP + H2O = 5-formamido-1-(5-phospho-D-ribosyl)imidazole-4-carboxamide. It functions in the pathway purine metabolism; IMP biosynthesis via de novo pathway; 5-formamido-1-(5-phospho-D-ribosyl)imidazole-4-carboxamide from 5-amino-1-(5-phospho-D-ribosyl)imidazole-4-carboxamide (10-formyl THF route): step 1/1. Its pathway is purine metabolism; IMP biosynthesis via de novo pathway; IMP from 5-formamido-1-(5-phospho-D-ribosyl)imidazole-4-carboxamide: step 1/1. The chain is Bifunctional purine biosynthesis protein PurH from Clostridium perfringens (strain ATCC 13124 / DSM 756 / JCM 1290 / NCIMB 6125 / NCTC 8237 / Type A).